Consider the following 59-residue polypeptide: Cecropin-B1 (59 aa).

The N-terminal stretch at 1–23 (MNFNKLFLIVILAALLLLGQTEA) is a signal peptide. The residue at position 57 (leucine 57) is a Leucine amide.

It belongs to the cecropin family.

It is found in the secreted. Functionally, cecropins have lytic and antibacterial activity against several Gram-positive and Gram-negative bacteria. The protein is Cecropin-B1 (CECB1) of Culex pipiens pipiens (Northern house mosquito).